An 86-amino-acid chain; its full sequence is Alpha-toxin TbTx5 (86 aa).

The first 19 residues, 1-19 (MNDFVFLVVACLLTAGTEG), serve as a signal peptide directing secretion. The 62-residue stretch at 21 to 82 (KDGYPVEGDN…EPTKTNGRCK (62 aa)) folds into the LCN-type CS-alpha/beta domain. 4 cysteine pairs are disulfide-bonded: cysteine 31/cysteine 81, cysteine 35/cysteine 57, cysteine 43/cysteine 64, and cysteine 47/cysteine 66. Proline 83 is subject to Proline amide.

Belongs to the long (4 C-C) scorpion toxin superfamily. Sodium channel inhibitor family. Alpha subfamily. As to expression, expressed by the venom gland.

Its subcellular location is the secreted. In terms of biological role, alpha toxins bind voltage-independently at site-3 of sodium channels (Nav) and inhibit the inactivation of the activated channels, thereby blocking neuronal transmission. This chain is Alpha-toxin TbTx5, found in Tityus bahiensis (Brazilian scorpion).